We begin with the raw amino-acid sequence, 378 residues long: Chaperone protein DnaJ (378 aa).

The region spanning 3–67 is the J domain; sequence DFYDTLGVNR…EKRARYDQFG (65 aa). The CR-type zinc-finger motif lies at 132–214; that stretch reads GQEREIKIPH…CGGQGVKQVR (83 aa). Cys145, Cys148, Cys162, Cys165, Cys188, Cys191, Cys202, and Cys205 together coordinate Zn(2+). CXXCXGXG motif repeat units lie at residues 145 to 152, 162 to 169, 188 to 195, and 202 to 209; these read CDVCRGTG, CSTCGGAG, CPTCSGSG, and CQSCGGQG.

This sequence belongs to the DnaJ family. As to quaternary structure, homodimer. The cofactor is Zn(2+).

The protein resides in the cytoplasm. Functionally, participates actively in the response to hyperosmotic and heat shock by preventing the aggregation of stress-denatured proteins and by disaggregating proteins, also in an autonomous, DnaK-independent fashion. Unfolded proteins bind initially to DnaJ; upon interaction with the DnaJ-bound protein, DnaK hydrolyzes its bound ATP, resulting in the formation of a stable complex. GrpE releases ADP from DnaK; ATP binding to DnaK triggers the release of the substrate protein, thus completing the reaction cycle. Several rounds of ATP-dependent interactions between DnaJ, DnaK and GrpE are required for fully efficient folding. Also involved, together with DnaK and GrpE, in the DNA replication of plasmids through activation of initiation proteins. This chain is Chaperone protein DnaJ, found in Prochlorococcus marinus (strain SARG / CCMP1375 / SS120).